We begin with the raw amino-acid sequence, 228 residues long: Ribosomal RNA small subunit methyltransferase G (228 aa).

S-adenosyl-L-methionine is bound by residues glycine 89, leucine 94, 140 to 141 (VE), and arginine 159.

It belongs to the methyltransferase superfamily. RNA methyltransferase RsmG family.

It is found in the cytoplasm. It catalyses the reaction guanosine(527) in 16S rRNA + S-adenosyl-L-methionine = N(7)-methylguanosine(527) in 16S rRNA + S-adenosyl-L-homocysteine. In terms of biological role, specifically methylates the N7 position of guanine in position 527 of 16S rRNA. The chain is Ribosomal RNA small subunit methyltransferase G from Burkholderia multivorans (strain ATCC 17616 / 249).